A 638-amino-acid polypeptide reads, in one-letter code: Threonine--tRNA ligase (638 aa).

The 63-residue stretch at 1-63 (MVMIQIELPD…TESGRLEIIT (63 aa)) folds into the TGS domain. A catalytic region spans residues 245 to 536 (DHRRIGRELD…LIEHYAGNFP (292 aa)). Zn(2+) contacts are provided by C337, H388, and H513.

This sequence belongs to the class-II aminoacyl-tRNA synthetase family. As to quaternary structure, homodimer. It depends on Zn(2+) as a cofactor.

It is found in the cytoplasm. The enzyme catalyses tRNA(Thr) + L-threonine + ATP = L-threonyl-tRNA(Thr) + AMP + diphosphate + H(+). In terms of biological role, catalyzes the attachment of threonine to tRNA(Thr) in a two-step reaction: L-threonine is first activated by ATP to form Thr-AMP and then transferred to the acceptor end of tRNA(Thr). Also edits incorrectly charged L-seryl-tRNA(Thr). The polypeptide is Threonine--tRNA ligase (Syntrophotalea carbinolica (strain DSM 2380 / NBRC 103641 / GraBd1) (Pelobacter carbinolicus)).